Here is a 422-residue protein sequence, read N- to C-terminus: Histidine--tRNA ligase (422 aa).

The protein belongs to the class-II aminoacyl-tRNA synthetase family. In terms of assembly, homodimer.

Its subcellular location is the cytoplasm. The catalysed reaction is tRNA(His) + L-histidine + ATP = L-histidyl-tRNA(His) + AMP + diphosphate + H(+). The protein is Histidine--tRNA ligase of Mycolicibacterium vanbaalenii (strain DSM 7251 / JCM 13017 / BCRC 16820 / KCTC 9966 / NRRL B-24157 / PYR-1) (Mycobacterium vanbaalenii).